The sequence spans 566 residues: Endoglucanase G (566 aa).

The signal sequence occupies residues 1–30 (MKKAKAIFSLVVALMVLAIFCFAQNTGSTA). The active-site Proton donor is Glu226. Glu381 serves as the catalytic Nucleophile. The segment at 473 to 494 (GTPQASDPPATPTATPTKPAAS) is disordered. Positions 474-494 (TPQASDPPATPTATPTKPAAS) are enriched in low complexity. Residues 497–564 (PSFIYGDINS…LLRSIDKLPH (68 aa)) enclose the Dockerin domain.

Belongs to the glycosyl hydrolase 5 (cellulase A) family.

It carries out the reaction Endohydrolysis of (1-&gt;4)-beta-D-glucosidic linkages in cellulose, lichenin and cereal beta-D-glucans.. Functionally, this enzyme catalyzes the endohydrolysis of 1,4-beta-glucosidic linkages in cellulose, lichenin and cereal beta-D-glucans. In Acetivibrio thermocellus (strain ATCC 27405 / DSM 1237 / JCM 9322 / NBRC 103400 / NCIMB 10682 / NRRL B-4536 / VPI 7372) (Clostridium thermocellum), this protein is Endoglucanase G (celG).